The primary structure comprises 462 residues: uncharacterized protein (462 aa).

The TRAM domain occupies methionine 12 to alanine 70. The S-adenosyl-L-methionine site is built by glutamine 294, tyrosine 323, glutamate 344, and aspartate 392. Cysteine 419 functions as the Nucleophile in the catalytic mechanism.

Belongs to the class I-like SAM-binding methyltransferase superfamily. RNA M5U methyltransferase family.

This is an uncharacterized protein from Streptococcus pyogenes serotype M1.